A 236-amino-acid polypeptide reads, in one-letter code: Phosphoribosylaminoimidazole-succinocarboxamide synthase (236 aa).

The protein belongs to the SAICAR synthetase family.

It catalyses the reaction 5-amino-1-(5-phospho-D-ribosyl)imidazole-4-carboxylate + L-aspartate + ATP = (2S)-2-[5-amino-1-(5-phospho-beta-D-ribosyl)imidazole-4-carboxamido]succinate + ADP + phosphate + 2 H(+). The protein operates within purine metabolism; IMP biosynthesis via de novo pathway; 5-amino-1-(5-phospho-D-ribosyl)imidazole-4-carboxamide from 5-amino-1-(5-phospho-D-ribosyl)imidazole-4-carboxylate: step 1/2. This Rickettsia typhi (strain ATCC VR-144 / Wilmington) protein is Phosphoribosylaminoimidazole-succinocarboxamide synthase.